Reading from the N-terminus, the 438-residue chain is uncharacterized protein (438 aa).

A run of 12 helical transmembrane segments spans residues 22–42 (VSPI…GGFG), 59–79 (SAAL…AGLF), 89–109 (IVKG…MLIA), 137–157 (MVMA…TPWG), 174–194 (FFVP…FLAF), 237–257 (LIYL…LGTK), 258–278 (HPSV…YPNV), 292–312 (AITV…LSGT), 330–350 (MGGF…FVLS), 356–376 (FGMV…PVEI), 380–400 (SIMG…VLLV), and 418–438 (AVIT…ITIL).

The protein belongs to the CitM (TC 2.A.11) transporter family.

Its subcellular location is the cell membrane. In terms of biological role, transports the free citrate anion. This is an uncharacterized protein from Bacillus subtilis (strain 168).